We begin with the raw amino-acid sequence, 238 residues long: Large ribosomal subunit protein uL1 (238 aa).

This sequence belongs to the universal ribosomal protein uL1 family. Part of the 50S ribosomal subunit.

Its function is as follows. Binds directly to 23S rRNA. The L1 stalk is quite mobile in the ribosome, and is involved in E site tRNA release. Protein L1 is also a translational repressor protein, it controls the translation of the L11 operon by binding to its mRNA. The polypeptide is Large ribosomal subunit protein uL1 (Rickettsia prowazekii (strain Madrid E)).